A 572-amino-acid chain; its full sequence is Proline--tRNA ligase (572 aa).

The protein belongs to the class-II aminoacyl-tRNA synthetase family. ProS type 1 subfamily. As to quaternary structure, homodimer.

The protein localises to the cytoplasm. It carries out the reaction tRNA(Pro) + L-proline + ATP = L-prolyl-tRNA(Pro) + AMP + diphosphate. Its function is as follows. Catalyzes the attachment of proline to tRNA(Pro) in a two-step reaction: proline is first activated by ATP to form Pro-AMP and then transferred to the acceptor end of tRNA(Pro). As ProRS can inadvertently accommodate and process non-cognate amino acids such as alanine and cysteine, to avoid such errors it has two additional distinct editing activities against alanine. One activity is designated as 'pretransfer' editing and involves the tRNA(Pro)-independent hydrolysis of activated Ala-AMP. The other activity is designated 'posttransfer' editing and involves deacylation of mischarged Ala-tRNA(Pro). The misacylated Cys-tRNA(Pro) is not edited by ProRS. The chain is Proline--tRNA ligase from Serratia proteamaculans (strain 568).